A 992-amino-acid polypeptide reads, in one-letter code: Disks large-associated protein 4 (992 aa).

Residues 1 to 20 (MKGLGDSRPRHLSDSLDPPH) are compositionally biased toward basic and acidic residues. Disordered stretches follow at residues 1–31 (MKGL…DRNP) and 154–226 (APSM…ASGL). Residues 162–171 (GKVGGNGGKK) are compositionally biased toward gly residues. The segment covering 172–194 (GVLEDGKGRRAKSKERAKAGEPK) has biased composition (basic and acidic residues). Residues 199-208 (SNISGWWSSD) are compositionally biased toward polar residues. Phosphoserine is present on residues Ser-206 and Ser-207. Arg-290 is subject to Omega-N-methylarginine. Disordered regions lie at residues 342 to 435 (TTLL…SWEE), 527 to 665 (SVSL…RKLS), 677 to 751 (VPKE…GPRQ), 763 to 798 (SYGD…AQPG), and 915 to 992 (TPEK…QTRL). 7 positions are modified to phosphoserine: Ser-377, Ser-380, Ser-384, Ser-388, Ser-405, Ser-415, and Ser-421. Polar residues predominate over residues 399-413 (LRATQQSLGEQSNPR). The span at 528 to 554 (VSLQSLSPPPSTGSLSNSRTLPSSSCL) shows a compositional bias: low complexity. The segment covering 576–591 (VTVQSSTESAQDTYLD) has biased composition (polar residues). Ser-580, Ser-581, Ser-609, Ser-611, Ser-665, and Ser-744 each carry phosphoserine. Residues 600–620 (TSQSGLSNSSDSLDSSTRPPS) show a composition bias toward low complexity. Position 915 is a phosphothreonine (Thr-915). Basic and acidic residues-rich tracts occupy residues 915–925 (TPEKRKEEKKP) and 940–958 (VSRD…EARK). Residues 969–978 (VRQNSATESA) are compositionally biased toward polar residues. The residue at position 973 (Ser-973) is a Phosphoserine.

The protein belongs to the SAPAP family. As to quaternary structure, interacts with DLG1 and DLG4/PSD-95. Expressed in brain.

It is found in the membrane. Functionally, may play a role in the molecular organization of synapses and neuronal cell signaling. Could be an adapter protein linking ion channel to the subsynaptic cytoskeleton. May induce enrichment of PSD-95/SAP90 at the plasma membrane. The chain is Disks large-associated protein 4 (Dlgap4) from Rattus norvegicus (Rat).